Consider the following 370-residue polypeptide: Glutamine synthetase (370 aa).

The GS beta-grasp domain occupies 23–102 (VLAEYVWIDA…VLTECWNNDG (80 aa)). Residues 40–69 (CKTLDKKPSSVEDLPEWNFDGSSTGQAPGH) are disordered. Residues 109–370 (HRHESAKLMK…FKEYARESSD (262 aa)) enclose the GS catalytic domain.

This sequence belongs to the glutamine synthetase family. Homooctamer.

The protein resides in the cytoplasm. It carries out the reaction L-glutamate + NH4(+) + ATP = L-glutamine + ADP + phosphate + H(+). This Debaryomyces hansenii (strain ATCC 36239 / CBS 767 / BCRC 21394 / JCM 1990 / NBRC 0083 / IGC 2968) (Yeast) protein is Glutamine synthetase (GLN1).